A 320-amino-acid polypeptide reads, in one-letter code: Adhesin MafA 3 (320 aa).

The signal sequence occupies residues 1 to 18; sequence MQARLLIPILFSVFILSA. C19 is lipidated: N-palmitoyl cysteine. Residue C19 is the site of S-diacylglycerol cysteine attachment. Residues 288 to 298 are compositionally biased toward polar residues; it reads HTGNSAPSVET. The tract at residues 288–320 is disordered; the sequence is HTGNSAPSVETDNSHEGYGYSDEVVRQHRQGQP.

Belongs to the MafA family.

It is found in the cell outer membrane. This is Adhesin MafA 3 (mafA3) from Neisseria meningitidis serogroup C / serotype 2a (strain ATCC 700532 / DSM 15464 / FAM18).